Reading from the N-terminus, the 265-residue chain is MSAPAKRRCRGPAADLDSSFQKRLRKISIEGNIAAGKSTLVRLLEKHSDEWEVIPEPIAKWCNIQTSEDECKELSTSQKSGGNLLQMLYDKPTRWAYTFQTYACLSRVRAQLKPISAKLHEAEHPVQFFERSVYSDRYVFASNLFESGNINETEWAIYQDWHSWLLNQFQSEIELDGIIYLRTTPQKCMERLQKRGRKEEEGIDLEYLENLHYKHETWLYEKTMRVDFENLKEIPILVLDVNEDFKNDKIKQEYLIDEIKSFLTS.

31–39 (GNIAAGKST) is an ATP binding site. Substrate is bound by residues E56, Y89, and Q100. Catalysis depends on E130, which acts as the Proton acceptor. Substrate-binding residues include R131 and D136. 191–195 (RLQKR) is a binding site for ATP. E200 is a substrate binding site. Residue 243–245 (EDF) coordinates ATP.

The protein belongs to the DCK/DGK family. As to quaternary structure, homodimer. As to expression, expressed at high levels in adult intestine, spleen, thymus and testis with lower levels in skeletal muscle and eye. In the embryo, expressed at higher levels until day 10 with lower levels in later stages.

The protein resides in the nucleus. It catalyses the reaction 2'-deoxycytidine + a ribonucleoside 5'-triphosphate = dCMP + a ribonucleoside 5'-diphosphate + H(+). The enzyme catalyses 2'-deoxyguanosine + ATP = dGMP + ADP + H(+). The catalysed reaction is 2'-deoxyadenosine + ATP = dAMP + ADP + H(+). Functionally, phosphorylates the deoxyribonucleosides deoxyadenosine, deoxycytidine and deoxyguanosine. Shows highest activity against deoxyguanosine followed by deoxycytidine and then deoxyadenosine. Shows only very minor activity against deoxyuridine and deoxythymidine. This is Deoxycytidine kinase 2 from Gallus gallus (Chicken).